The following is a 294-amino-acid chain: Cytidine deaminase (294 aa).

CMP/dCMP-type deaminase domains follow at residues 48 to 168 and 187 to 294; these read DDDA…FGPK and ALTD…RITF. Position 89–91 (89–91) interacts with substrate; that stretch reads NME. His-102 serves as a coordination point for Zn(2+). The active-site Proton donor is the Glu-104. Zn(2+)-binding residues include Cys-129 and Cys-132.

It belongs to the cytidine and deoxycytidylate deaminase family. Homodimer. It depends on Zn(2+) as a cofactor.

It catalyses the reaction cytidine + H2O + H(+) = uridine + NH4(+). It carries out the reaction 2'-deoxycytidine + H2O + H(+) = 2'-deoxyuridine + NH4(+). Functionally, this enzyme scavenges exogenous and endogenous cytidine and 2'-deoxycytidine for UMP synthesis. In Serratia proteamaculans (strain 568), this protein is Cytidine deaminase.